Here is a 393-residue protein sequence, read N- to C-terminus: Matrix metalloproteinase-23 (393 aa).

The Cytoplasmic portion of the chain corresponds to 1–20 (MGRGACVPSAASGAGDRARQ). A propeptide spanning residues 1-81 (MGRGACVPSA…PHPPVPRRRR (81 aa)) is cleaved from the precursor. Residues 21 to 41 (LGAVLGALCLFPALVLLAWPG) form a helical; Signal-anchor for type II membrane protein membrane-spanning segment. Topologically, residues 42–393 (TPANGAGARV…TYSWRIRVRS (352 aa)) are lumenal. The disordered stretch occupies residues 60-79 (TSGVLASGSLGPPHPPVPRR). 2 N-linked (GlcNAc...) asparagine glycosylation sites follow: asparagine 95 and asparagine 151. Histidine 214 contacts Zn(2+). The active site involves glutamate 215. Histidine 218 and histidine 224 together coordinate Zn(2+). Asparagine 235 carries an N-linked (GlcNAc...) asparagine glycan. In terms of domain architecture, ShKT spans 258–292 (CLDRLFVCASWARRGFCDTRRRLMKRLCPSSCDFC). Disulfide bonds link cysteine 258/cysteine 292, cysteine 265/cysteine 285, and cysteine 274/cysteine 289. In terms of domain architecture, Ig-like C2-type spans 298–383 (PTVAATPPPP…VVRRRQRVLS (86 aa)). An N-linked (GlcNAc...) asparagine glycan is attached at asparagine 319. Cysteine 324 and cysteine 373 form a disulfide bridge.

Belongs to the peptidase M10A family. Requires Zn(2+) as cofactor. N-glycosylated. Post-translationally, proteolytic cleavage might yield an active form.

It localises to the membrane. The protein resides in the endoplasmic reticulum membrane. Protease. May regulate the surface expression of some potassium channels by retaining them in the endoplasmic reticulum. The sequence is that of Matrix metalloproteinase-23 (MMP23) from Bos taurus (Bovine).